Reading from the N-terminus, the 88-residue chain is Transcription factor ILI5 (88 aa).

The region spanning 1–54 (MSSRRSSRGSISEEEINELISKLQSLLPNSRRRGSSQASTTKLLKETCNYIKSL) is the bHLH domain.

It belongs to the bHLH protein family. In terms of assembly, interacts with APG.

It is found in the nucleus. Its function is as follows. Atypical and probable non DNA-binding bHLH transcription factor that acts as a positive regulator of grain size. Binds the transcription repressor APG and forms a heterodimer of antagonistic basic helix-loop-helix transcription factors that regulates grain length and weight by controlling cell elongation in lemma and palea. The chain is Transcription factor ILI5 (ILI5) from Oryza sativa subsp. indica (Rice).